Here is a 133-residue protein sequence, read N- to C-terminus: C-C motif chemokine 21b (133 aa).

Residues 1 to 23 form the signal peptide; that stretch reads MAQMMTLSLLSLVLALCIPWTQG. 3 cysteine pairs are disulfide-bonded: C31-C57, C32-C75, and C103-C122. Positions 87 to 133 are disordered; that stretch reads MRRLDQPPAPGKQSPGCRKNRGTSKSGKKGKGSKGCKRTEQTQPSRG. The interval 98-133 is C-terminal basic extension; it reads KQSPGCRKNRGTSKSGKKGKGSKGCKRTEQTQPSRG. Basic residues predominate over residues 104–122; the sequence is RKNRGTSKSGKKGKGSKGC.

This sequence belongs to the intercrine beta (chemokine CC) family. Binds to CCR7 and to CXCR3. Interacts with PDPN; relocalizes PDPN to the basolateral membrane. Interacts with GPR174. In terms of tissue distribution, expressed strongly in lung, spleen, thymus, peripheral and mesentric lymph nodes. Also expressed in the testis, kidney, liver, and heart.

It is found in the secreted. Inhibits hemopoiesis and stimulates chemotaxis. Chemotactic in vitro for thymocytes and activated T-cells, but not for B-cells, macrophages, or neutrophils. Potent mesangial cell chemoattractant. Shows preferential activity towards naive T-cells. May play a role in mediating homing of lymphocytes to secondary lymphoid organs. This chain is C-C motif chemokine 21b (Ccl21b), found in Mus musculus (Mouse).